Reading from the N-terminus, the 144-residue chain is Large ribosomal subunit protein uL15 (144 aa).

A disordered region spans residues 1–51 (MQLNTLSPAQGEKKSRKRVGRGIGSGIGKTCGSGHKGQKSRSGGFNKIGFE). Residues 21–35 (RGIGSGIGKTCGSGH) show a composition bias toward gly residues.

Belongs to the universal ribosomal protein uL15 family. In terms of assembly, part of the 50S ribosomal subunit.

Binds to the 23S rRNA. This chain is Large ribosomal subunit protein uL15, found in Vesicomyosocius okutanii subsp. Calyptogena okutanii (strain HA).